The sequence spans 1050 residues: DNA polymerase I A, chloroplastic/mitochondrial (1050 aa).

Residues 1–91 (MAMGVSLTSH…VVFNGEWELR (91 aa)) constitute a chloroplast and mitochondrion transit peptide. The tract at residues 202-240 (PRKGLDVGDNMDVNPKGEGIQRPLISDKSSGTANGNKNT) is disordered. Residues 228-240 (DKSSGTANGNKNT) are compositionally biased toward polar residues. The 3'-5' exonuclease domain maps to 312 to 490 (ELICFSIYCG…LYESMTKKLQ (179 aa)). Residues 673 to 694 (VVEDDDVETSETQKSKTDDETD) form a disordered region. The interval 717–1048 (AIASLCEVCS…DAKCAQNWYA (332 aa)) is polymerase.

Belongs to the DNA polymerase type-A family. As to expression, expressed in shoot apical meristem.

The protein resides in the plastid. It localises to the chloroplast. It is found in the mitochondrion. The enzyme catalyses DNA(n) + a 2'-deoxyribonucleoside 5'-triphosphate = DNA(n+1) + diphosphate. Its activity is regulated as follows. Not inhibited by aphidicolin. Functionally, in addition to polymerase activity, this DNA polymerase exhibits 5'-3' exonuclease activity. Required for DNA replication and accumulation in plastids and mitochondria. May be required for DNA repair in both organelles. The protein is DNA polymerase I A, chloroplastic/mitochondrial (POLIA) of Arabidopsis thaliana (Mouse-ear cress).